A 408-amino-acid chain; its full sequence is Histidine--tRNA ligase (408 aa).

The protein belongs to the class-II aminoacyl-tRNA synthetase family. Homodimer.

The protein resides in the cytoplasm. The catalysed reaction is tRNA(His) + L-histidine + ATP = L-histidyl-tRNA(His) + AMP + diphosphate + H(+). The chain is Histidine--tRNA ligase from Campylobacter jejuni subsp. jejuni serotype O:6 (strain 81116 / NCTC 11828).